A 202-amino-acid chain; its full sequence is Complement component C8 gamma chain (202 aa).

An N-terminal signal peptide occupies residues 1–20; it reads MLPPGTATLLTLLLAAGSLG. Q21 carries the pyrrolidone carboxylic acid modification. C96 and C188 are oxidised to a cystine.

The protein belongs to the calycin superfamily. Lipocalin family. In terms of assembly, heterotrimer of 3 chains: alpha (C8A), beta (C8B) and gamma (C8G); the alpha and gamma chains are disulfide bonded. Component of the membrane attack complex (MAC), composed of complement C5b, C6, C7, C8A, C8B, C8G and multiple copies of the pore-forming subunit C9.

The protein localises to the secreted. It is found in the target cell membrane. With respect to regulation, membrane attack complex (MAC) assembly is inhibited by CD59, thereby protecting self-cells from damage during complement activation. MAC assembly is also inhibited by clusterin (CLU) chaperones that inhibit polymerization of C9. Component of the membrane attack complex (MAC), a multiprotein complex activated by the complement cascade, which inserts into a target cell membrane and forms a pore, leading to target cell membrane rupture and cell lysis. The MAC is initiated by proteolytic cleavage of C5 into complement C5b in response to the classical, alternative, lectin and GZMK complement pathways. The complement pathways consist in a cascade of proteins that leads to phagocytosis and breakdown of pathogens and signaling that strengthens the adaptive immune system. C8G, together with C8A and C8B, inserts into the target membrane, but does not form pores by itself. During MAC assembly, associates with C5b, C6 and C7 to form the C5b8 intermediate complex that inserts into the target membrane and traverses the bilayer increasing membrane rigidity. This chain is Complement component C8 gamma chain, found in Homo sapiens (Human).